The sequence spans 373 residues: MTTEANSTAEEGYSVQRDFWRQAAKSDGFDLENISLPPGTNGIVMGLIPYDCQRARHYPFPVLVKLYAKFGLHRYNMLKGTSFQLATLMKFNMLPNYISSFYMTLLAHDPDPAAGSSQKTFQVRVDEQQFGSLDINCSIARPKHEGDLLEVSTETPFMPHFHGGALGDGIFKVELPDCLSDTALNELAGAVLRGELPEHVFDDALYARAGGIFQGELPDWPSDDVLNDGKRFYMVKESEWQATDWISMYLELVITTTDKSISIKPEVLSKLEIVKVAIETATKDEEPSNERLKAYRAHVYITFKGLAEPRAHERVFEIGEHVERQAIVRRVMGHRGDLTLKGKLCGGQYIKKRSLALKSGKKSQKCKKQALVG.

T2 bears the N-acetylthreonine mark.

This sequence belongs to the UPF0725 (EMB2204) family.

This Arabidopsis thaliana (Mouse-ear cress) protein is UPF0725 protein At1g23950.